Reading from the N-terminus, the 230-residue chain is Probable cobalt-precorrin-2 C(20)-methyltransferase (230 aa).

Belongs to the precorrin methyltransferase family.

It carries out the reaction Co-precorrin-2 + S-adenosyl-L-methionine = Co-precorrin-3 + S-adenosyl-L-homocysteine + H(+). It participates in cofactor biosynthesis; adenosylcobalamin biosynthesis; cob(II)yrinate a,c-diamide from sirohydrochlorin (anaerobic route): step 2/10. In terms of biological role, methylates cobalt-precorrin-2 at the C-20 position to produce cobalt-precorrin-3A in the anaerobic cobalamin biosynthesis pathway. In Methanocaldococcus jannaschii (strain ATCC 43067 / DSM 2661 / JAL-1 / JCM 10045 / NBRC 100440) (Methanococcus jannaschii), this protein is Probable cobalt-precorrin-2 C(20)-methyltransferase (cbiL).